Consider the following 358-residue polypeptide: Membrane-bound lytic murein transglycosylase C (358 aa).

The first 16 residues, 1 to 16 (MKKILALLVIAPLLVS), serve as a signal peptide directing secretion. Residue C17 is the site of N-palmitoyl cysteine attachment. A lipid anchor (S-diacylglycerol cysteine) is attached at C17.

Belongs to the transglycosylase Slt family.

Its subcellular location is the cell outer membrane. The catalysed reaction is Exolytic cleavage of the (1-&gt;4)-beta-glycosidic linkage between N-acetylmuramic acid (MurNAc) and N-acetylglucosamine (GlcNAc) residues in peptidoglycan, from either the reducing or the non-reducing ends of the peptidoglycan chains, with concomitant formation of a 1,6-anhydrobond in the MurNAc residue.. Its function is as follows. Murein-degrading enzyme. May play a role in recycling of muropeptides during cell elongation and/or cell division. In Yersinia pseudotuberculosis serotype O:1b (strain IP 31758), this protein is Membrane-bound lytic murein transglycosylase C.